We begin with the raw amino-acid sequence, 166 residues long: Prorelaxin H1 (166 aa).

The signal sequence occupies residues 1–5 (SRAVA). 3 cysteine pairs are disulfide-bonded: C16–C153, C28–C166, and C152–C157. A propeptide spans 37-139 (SLSQEDAPQT…KYLGLDTHSQ (103 aa)) (connecting peptide).

The protein belongs to the insulin family. In terms of assembly, heterodimer of a B chain and an A chain linked by two disulfide bonds. Expressed in the corpus luteum of pregnancy but not in the placenta.

The protein resides in the secreted. In terms of biological role, relaxin is an ovarian hormone that acts with estrogen to produce dilatation of the birth canal in many mammals. May be involved in remodeling of connective tissues during pregnancy, promoting growth of pubic ligaments and ripening of the cervix. The polypeptide is Prorelaxin H1 (RNL1) (Pan troglodytes (Chimpanzee)).